Reading from the N-terminus, the 880-residue chain is Leucine--tRNA ligase (880 aa).

The 'HIGH' region signature appears at 49-59 (PYPSGRIHMGH). Positions 638-642 (KMSKS) match the 'KMSKS' region motif. An ATP-binding site is contributed by Lys641.

Belongs to the class-I aminoacyl-tRNA synthetase family.

The protein resides in the cytoplasm. It carries out the reaction tRNA(Leu) + L-leucine + ATP = L-leucyl-tRNA(Leu) + AMP + diphosphate. In Bartonella quintana (strain Toulouse) (Rochalimaea quintana), this protein is Leucine--tRNA ligase.